Consider the following 114-residue polypeptide: MLSTRIQCALALLSLALAVCSVSAAPTDAKLRQLLQRSLLNPAGKQELARYTLADLLSELVQAENEALEPEDLSRAVEKDEVRLELERAAGPMLAPRERKAGCKNFFWKTFTSC.

An N-terminal signal peptide occupies residues 1 to 24 (MLSTRIQCALALLSLALAVCSVSA). Positions 25-88 (APTDAKLRQL…KDEVRLELER (64 aa)) are excised as a propeptide. A disulfide bridge links Cys-103 with Cys-114.

It belongs to the somatostatin family.

It is found in the secreted. In terms of biological role, somatostatin inhibits the release of somatotropin. The polypeptide is Somatostatin-1A (sst1a) (Carassius auratus (Goldfish)).